Reading from the N-terminus, the 446-residue chain is Phosphoglucosamine mutase (446 aa).

Catalysis depends on Ser99, which acts as the Phosphoserine intermediate. Mg(2+) is bound by residues Ser99, Asp242, Asp244, and Asp246. Position 99 is a phosphoserine (Ser99).

It belongs to the phosphohexose mutase family. Mg(2+) serves as cofactor. Post-translationally, activated by phosphorylation.

The enzyme catalyses alpha-D-glucosamine 1-phosphate = D-glucosamine 6-phosphate. In terms of biological role, catalyzes the conversion of glucosamine-6-phosphate to glucosamine-1-phosphate. In Campylobacter fetus subsp. fetus (strain 82-40), this protein is Phosphoglucosamine mutase.